Consider the following 153-residue polypeptide: Natriuretic peptides A (153 aa).

The N-terminal stretch at Met-1–Ala-25 is a signal peptide. 2 consecutive propeptides follow at residues Asn-26–Arg-123 and Asp-93–Asp-103. The disordered stretch occupies residues Val-62–Ser-104. Ser-129 is modified (phosphoserine). A disulfide bridge links Cys-130 with Cys-146. Residues Asn-147–Tyr-151 are important for degradation of atrial natriuretic peptide by IDE.

The protein belongs to the natriuretic peptide family. In terms of assembly, homodimer; disulfide-linked antiparallel dimer. In terms of processing, the precursor molecule is proteolytically cleaved by CORIN at Arg-123 to produce the atrial natriuretic peptide. Undergoes further proteolytic cleavage by unknown proteases to give rise to long-acting natriuretic peptide, vessel dilator and kaliuretic peptide. Additional processing gives rise to the auriculin and atriopeptin peptides. In the kidneys, alternative processing by an unknown protease results in the peptide urodilatin. Post-translationally, cleavage by MME initiates degradation of the factor and thereby regulates its activity. Degradation by IDE results in reduced activation of NPR1 (in vitro). During IDE degradation, the resulting products can temporarily stimulate NPR2 to produce cGMP, before the fragments are completely degraded and inactivated by IDE (in vitro). Degraded by IDE. In terms of processing, phosphorylation on Ser-129 decreases vasorelaxant activity.

It localises to the secreted. The protein resides in the perikaryon. Its subcellular location is the cell projection. In terms of biological role, hormone that plays a key role in mediating cardio-renal homeostasis, and is involved in vascular remodeling and regulating energy metabolism. Acts by specifically binding and stimulating NPR1 to produce cGMP, which in turn activates effector proteins, such as PRKG1, that drive various biological responses. Regulates vasodilation, natriuresis, diuresis and aldosterone synthesis and is therefore essential for regulating blood pressure, controlling the extracellular fluid volume and maintaining the fluid-electrolyte balance. Also involved in inhibiting cardiac remodeling and cardiac hypertrophy by inducing cardiomyocyte apoptosis and attenuating the growth of cardiomyocytes and fibroblasts. Plays a role in female pregnancy by promoting trophoblast invasion and spiral artery remodeling in uterus, and thus prevents pregnancy-induced hypertension. In adipose tissue, acts in various cGMP- and PKG-dependent pathways to regulate lipid metabolism and energy homeostasis. This includes up-regulating lipid metabolism and mitochondrial oxygen utilization by activating the AMP-activated protein kinase (AMPK), and increasing energy expenditure by acting via MAPK11 to promote the UCP1-dependent thermogenesis of brown adipose tissue. Binds the clearance receptor NPR3 which removes the hormone from circulation. May have a role in cardio-renal homeostasis through regulation of natriuresis, diuresis, vasodilation, and inhibiting aldosterone synthesis. In vitro, promotes the production of cGMP and induces vasodilation. May promote natriuresis, at least in part, by enhancing prostaglandin E2 synthesis resulting in the inhibition of renal Na+-K+-ATPase. However reports on the involvement of this peptide in mammal blood volume and blood pressure homeostasis are conflicting; according to a report, in vivo it is not sufficient to activate cGMP and does not inhibit collecting duct transport nor effect diuresis and natriuresis. Appears to bind to specific receptors that are distinct from the receptors bound by atrial natriuretic peptide and vessel dilator. Possibly enhances protein excretion in urine by decreasing proximal tubular protein reabsorption. Functionally, may have a role in cardio-renal homeostasis through regulation of natriuresis, diuresis, and vasodilation. In vitro, promotes the production of cGMP and induces vasodilation. May promote natriuresis, at least in part, by enhancing prostaglandin E2 synthesis resulting in the inhibition of renal Na+-K+-ATPase. However reports on the involvement of this peptide in mammal blood volume and blood pressure homeostasis are conflicting; according to a report it is not sufficient to activate cGMP and does not inhibit collecting duct transport nor effect diuresis and natriuresis. Appears to bind to specific receptors that are distinct from the receptors bound by the atrial natriuretic and long-acting natriuretic peptides. Possibly functions in protein excretion in urine by maintaining the integrity of the proximal tubules and enhancing protein excretion by decreasing proximal tubular protein reabsorption. Its function is as follows. May have a role in cardio-renal homeostasis through regulation of diuresis and inhibiting aldosterone synthesis. In vitro, promotes the production of cGMP and induces vasodilation. May promote natriuresis, at least in part, by enhancing prostaglandin E2 synthesis resulting in the inhibition of renal Na+-K+-ATPase. May have a role in potassium excretion but not sodium excretion (natriuresis). Possibly enhances protein excretion in urine by decreasing proximal tubular protein reabsorption. In terms of biological role, hormone produced in the kidneys that appears to be important for maintaining cardio-renal homeostasis. Mediates vasodilation, natriuresis and diuresis primarily in the renal system, in order to maintain the extracellular fluid volume and control the fluid-electrolyte balance. Specifically binds and stimulates cGMP production by renal transmembrane receptors, likely NPR1. Urodilatin not ANP, may be the natriuretic peptide responsible for the regulation of sodium and water homeostasis in the kidney. May have a role in cardio-renal homeostasis through regulation of natriuresis and vasodilation. In vivo promotes natriuresis and in vitro, vasodilates renal artery strips. Functionally, may have a role in cardio-renal homeostasis through regulation of regulation of natriuresis and vasodilation. In vivo promotes natriuresis. In vitro, vasodilates intestinal smooth muscle but not smooth muscle strips. Its function is as follows. May have a role in cardio-renal homeostasis through regulation of natriuresis and vasodilation. In vivo promotes natriuresis. In vitro, selectively vasodilates intestinal and vascular smooth muscle strips. In terms of biological role, may have a role in cardio-renal homeostasis through regulation of natriuresis and vasodilation. In vivo promotes natriuresis. In vitro, selectively vasodilates intestinal smooth muscle but not vascular smooth muscle strips. This Felis catus (Cat) protein is Natriuretic peptides A (NPPA).